A 170-amino-acid polypeptide reads, in one-letter code: Zinc finger protein 576 (170 aa).

A disordered region spans residues 1–29 (MEDPNPEENMKQQDSPKERSPQSPGGNIC). The span at 8-20 (ENMKQQDSPKERS) shows a compositional bias: basic and acidic residues. 4 C2H2-type zinc fingers span residues 34–57 (PKCT…KREH), 71–93 (FICF…QRSH), 112–134 (FPCP…RQMH), and 143–165 (FACT…YIRH).

The protein belongs to the krueppel C2H2-type zinc-finger protein family.

The protein localises to the nucleus. Functionally, may be involved in transcriptional regulation. The protein is Zinc finger protein 576 (ZNF576) of Homo sapiens (Human).